Here is a 194-residue protein sequence, read N- to C-terminus: MNANDASNTCNGSNDSINDSDFPARSGCASFVSRLFAGSTLDEKVIDLLVDSVESQGLRRLESPSPTVLRSLSKFISDIPEENLTSLEEDAMDTKTGELVKCIRFPTLVTELTGGGKISVESKKLLGTEVLNWFRVQHDVRRTKIIVKAPIFSDGRKLSTQHEAIRYTREDVLMLIVLTWRFLQYKLKDEEIIY.

Belongs to the mimivirus L114/R131 family.

This is an uncharacterized protein from Acanthamoeba polyphaga mimivirus (APMV).